The following is a 427-amino-acid chain: Glutamate-1-semialdehyde 2,1-aminomutase (427 aa).

Lysine 265 is subject to N6-(pyridoxal phosphate)lysine.

It belongs to the class-III pyridoxal-phosphate-dependent aminotransferase family. HemL subfamily. As to quaternary structure, homodimer. The cofactor is pyridoxal 5'-phosphate.

The protein localises to the cytoplasm. The enzyme catalyses (S)-4-amino-5-oxopentanoate = 5-aminolevulinate. It participates in porphyrin-containing compound metabolism; protoporphyrin-IX biosynthesis; 5-aminolevulinate from L-glutamyl-tRNA(Glu): step 2/2. The polypeptide is Glutamate-1-semialdehyde 2,1-aminomutase (Marinomonas sp. (strain MWYL1)).